We begin with the raw amino-acid sequence, 478 residues long: Septin-4 (478 aa).

The tract at residues 1 to 115 (MDHSLGWQGN…RSPWGKLDPY (115 aa)) is disordered. Residues serine 28, serine 29, and serine 68 each carry the phosphoserine modification. The span at 84-93 (PQPSDSQQYF) shows a compositional bias: polar residues. The segment covering 94-108 (SAPAPLSPSSRPRSP) has biased composition (low complexity). Residues serine 117 and serine 118 each carry the phosphoserine modification. In terms of domain architecture, Septin-type G spans 141–414 (KGFDFTLMVA…ENYRAQCIQS (274 aa)). The tract at residues 151 to 158 (GESGLGKS) is G1 motif. GTP-binding positions include 151–158 (GESGLGKS) and threonine 185. The G3 motif stretch occupies residues 208-211 (DTPG). The G4 motif stretch occupies residues 289-292 (AKAD). 290-298 (KADTLTPPE) serves as a coordination point for GTP. At serine 325 the chain carries Phosphoserine. GTP is bound by residues glycine 348 and arginine 363. Positions 428–449 (LTRESGTDFPIPAVPPGTDPET) are disordered. Serine 432 is subject to Phosphoserine. The residue at position 434 (threonine 434) is a Phosphothreonine. Positions 447-478 (PETEKLIREKDEELRRMQEMLHKIQRQMKETH) form a coiled coil.

Belongs to the TRAFAC class TrmE-Era-EngA-EngB-Septin-like GTPase superfamily. Septin GTPase family. As to quaternary structure, septins polymerize into heterooligomeric protein complexes that form filaments, and can associate with cellular membranes, actin filaments and microtubules. GTPase activity is required for filament formation. Interacts with SEPTIN8. Component of a septin core octameric complex consisting of SEPTIN12, SEPTIN7, SEPTIN6 and SEPTIN2 or SEPTIN4 in the order 12-7-6-2-2-6-7-12 or 12-7-6-4-4-6-7-12. Interacts with SEPTIN14 (via C-terminus). Interacts with DYRK1A. Interacts with SLC6A3/DAT and SNCA/alpha-synuclein. Interacts with STX1A; in the striatum. Interacts with XIAP (via BIR3 domain) following the induction of apoptosis. Interacts with AREL1 (via HECT domain); in the cytoplasm following induction of apoptosis. In terms of assembly, interacts with DPYSL5. In terms of processing, phosphorylated by DYRK1A. Post-translationally, ubiquitinated by AREL1. May be phosphorylated. In terms of tissue distribution, expressed in the cerebral cortex, striatum, midbrain, cerebellum and spinal cord (at protein level). Expressed in the substantia nigra pars compacta, ventral tegmental area, projection fiber bundles and in axon terminals surrounding striatal neurons (at protein level). Expressed in hair follicle stem cells (at protein level). Expressed in small intestinal crypts; abundantly expressed at the crypt base (at protein level). Widely expressed in the brain and to a lesser extent in the testis, lung and liver. As to expression, highly expressed in the brain and testis and, to a lesser extent in the heart, lung and kidney. In the brain, abundant in areas of high cell density, particularly in the stria terminalis. Expressed in the entorhinal, temporal and visual cortices and the hippocampus of the brain where is colocalizes with DYRK1A in postnatal day 1 and adult mice. Expressed and extensively colocalizes with DYRK1A in apical dendrites of pyramidal cells. Predominantly expressed in embryonic brain and dorsal root ganglion neurons. In terms of tissue distribution, expressed in LGR5-positive intestinal stem cells and lysozyme-positive Paneth cells (at protein level). Expressed in the brain and testis.

It is found in the cytoplasm. The protein localises to the cell projection. The protein resides in the cilium. It localises to the flagellum. Its subcellular location is the cytoplasmic vesicle. It is found in the secretory vesicle. The protein localises to the axon. The protein resides in the dendrite. It localises to the perikaryon. Its subcellular location is the synapse. It is found in the mitochondrion. The protein localises to the cytosol. Filament-forming cytoskeletal GTPase. Pro-apoptotic protein involved in LGR5-positive intestinal stem cell and Paneth cell expansion in the intestines, via its interaction with XIAP. May also play a role in the regulation of cell fate in the intestine. Positive regulator of apoptosis involved in hematopoietic stem cell homeostasis; via its interaction with XIAP. Negative regulator of repair and hair follicle regeneration in response to injury, due to inhibition of hair follicle stem cell proliferation, potentially via its interaction with XIAP. Plays an important role in male fertility and sperm motility. During spermiogenesis, essential for the establishment of the annulus (a fibrous ring structure connecting the midpiece and the principal piece of the sperm flagellum) which is a requisite for the structural and mechanical integrity of the sperm. Involved in the migration of cortical neurons and the formation of neuron leading processes during embryonic development. Required for dopaminergic metabolism in presynaptic autoreceptors; potentially via activity as a presynaptic scaffold protein. The polypeptide is Septin-4 (Mus musculus (Mouse)).